The primary structure comprises 643 residues: Chromosomal replication initiator protein DnaA (643 aa).

Residues 1–97 (MADVPADLAA…VDDSAGEPPP (97 aa)) form a domain I, interacts with DnaA modulators region. A disordered region spans residues 87–303 (TVDDSAGEPP…ASGPGEPTAR (217 aa)). The segment at 97–302 (PAAPPAQQTP…PASGPGEPTA (206 aa)) is domain II. Polar residues predominate over residues 195-209 (SPSSQDAYGSPSQDY). Residues 222-269 (QRGDYDTPRAEYEPARPDYDSARPDYESARPEYDQRDPVRRELPEPPA) show a composition bias toward basic and acidic residues. Residues 291–300 (PAPASGPGEP) are compositionally biased toward low complexity. The domain III, AAA+ region stretch occupies residues 303-519 (RLNPKYLFDT…GALIRVTAFA (217 aa)). Residues Gly347, Gly349, Lys350, and Thr351 each coordinate ATP. The tract at residues 520–643 (SLNRQPVDLG…TELTNRIKNG (124 aa)) is domain IV, binds dsDNA.

This sequence belongs to the DnaA family. In terms of assembly, oligomerizes as a right-handed, spiral filament on DNA at oriC.

The protein localises to the cytoplasm. Functionally, plays an essential role in the initiation and regulation of chromosomal replication. ATP-DnaA binds to the origin of replication (oriC) to initiate formation of the DNA replication initiation complex once per cell cycle. Binds the DnaA box (a 9 base pair repeat at the origin) and separates the double-stranded (ds)DNA. Forms a right-handed helical filament on oriC DNA; dsDNA binds to the exterior of the filament while single-stranded (ss)DNA is stabiized in the filament's interior. The ATP-DnaA-oriC complex binds and stabilizes one strand of the AT-rich DNA unwinding element (DUE), permitting loading of DNA polymerase. After initiation quickly degrades to an ADP-DnaA complex that is not apt for DNA replication. Binds acidic phospholipids. This chain is Chromosomal replication initiator protein DnaA, found in Streptomyces reticuli.